We begin with the raw amino-acid sequence, 1608 residues long: Mitogen-activated protein kinase kinase kinase 4 (1608 aa).

Positions 1 to 23 (MREAAAALVPPPAFAVTPAAAME) are enriched in low complexity. Disordered stretches follow at residues 1–136 (MREA…ENVE) and 429–478 (IPSP…RQPI). Residues 24–37 (EPPPPPPPPPPPPE) show a composition bias toward pro residues. A compositionally biased stretch (acidic residues) spans 66-76 (SDLEDFSDETN). Phosphoserine is present on S84. Basic residues predominate over residues 91–101 (QMKRMSTKHQR). The residue at position 431 (S431) is a Phosphoserine. T447 is subject to Phosphothreonine. S456 and S457 each carry phosphoserine. Acidic residues predominate over residues 456–466 (SSTDESEEEQI). T458 bears the Phosphothreonine mark. Residues S461, S481, and S499 each carry the phosphoserine modification. 3 disordered regions span residues 1157 to 1190 (CHSDPPNPHLIIPTPEGFSTRSMPSDARSHGSPA), 1202 to 1231 (ASRPSPSGGDSVLPKSISSAHDTRGSSVPE), and 1244 to 1274 (FRSLSRHSSPTEERDEPAYPRGDSSGSTRRS). The segment covering 1217-1230 (SISSAHDTRGSSVP) has biased composition (polar residues). 2 positions are modified to phosphoserine: S1252 and S1274. Basic and acidic residues predominate over residues 1252 to 1261 (SPTEERDEPA). A Protein kinase domain is found at 1343–1601 (WQRGNKIGEG…ASQLLDHSFV (259 aa)). Residues 1349-1357 (IGEGQYGKV) and K1372 each bind ATP. The active-site Proton acceptor is the D1463.

It belongs to the protein kinase superfamily. STE Ser/Thr protein kinase family. MAP kinase kinase kinase subfamily. Monomer and homodimer. Homodimerization enhances kinase activity. Interacts with TRAF4; this promotes homodimerization. Binds both upstream activators and downstream substrates in multimolecular complexes. Interacts with AXIN1 and DIXDC1; interaction with DIXDC1 prevents interaction with AXIN1. Interacts with GADD45 and MAP2K6. Interacts with ZFP36; this interaction enhances the association with SH3KBP1/CIN85. Interacts with SH3KBP1; this interaction enhances the association with ZFP36. Interacts with CDC42. The cofactor is Mg(2+). Expressed at high levels in heart, placenta, skeletal muscle and pancreas, and at lower levels in other tissues.

It localises to the cytoplasm. The protein resides in the perinuclear region. It catalyses the reaction L-seryl-[protein] + ATP = O-phospho-L-seryl-[protein] + ADP + H(+). It carries out the reaction L-threonyl-[protein] + ATP = O-phospho-L-threonyl-[protein] + ADP + H(+). With respect to regulation, N-terminal autoinhibitory domain interacts with the C-terminal kinase domain, inhibiting kinase activity, and preventing interaction with its substrate, MAP2K6. The GADD45 proteins activate the kinase by binding to the N-terminal domain. Activated by phosphorylation on Thr-1505. Its function is as follows. Component of a protein kinase signal transduction cascade. Activates the CSBP2, P38 and JNK MAPK pathways, but not the ERK pathway. Specifically phosphorylates and activates MAP2K4 and MAP2K6. The polypeptide is Mitogen-activated protein kinase kinase kinase 4 (MAP3K4) (Homo sapiens (Human)).